The following is a 532-amino-acid chain: Glutamate--cysteine ligase (532 aa).

The protein belongs to the glutamate--cysteine ligase type 1 family. Type 1 subfamily.

The catalysed reaction is L-cysteine + L-glutamate + ATP = gamma-L-glutamyl-L-cysteine + ADP + phosphate + H(+). Its pathway is sulfur metabolism; glutathione biosynthesis; glutathione from L-cysteine and L-glutamate: step 1/2. The polypeptide is Glutamate--cysteine ligase (Pseudomonas fluorescens (strain ATCC BAA-477 / NRRL B-23932 / Pf-5)).